The following is a 179-amino-acid chain: Large ribosomal subunit protein uL5 (179 aa).

It belongs to the universal ribosomal protein uL5 family. Part of the 50S ribosomal subunit; part of the 5S rRNA/L5/L18/L25 subcomplex. Contacts the 5S rRNA and the P site tRNA. Forms a bridge to the 30S subunit in the 70S ribosome.

Its function is as follows. This is one of the proteins that bind and probably mediate the attachment of the 5S RNA into the large ribosomal subunit, where it forms part of the central protuberance. In the 70S ribosome it contacts protein S13 of the 30S subunit (bridge B1b), connecting the 2 subunits; this bridge is implicated in subunit movement. Contacts the P site tRNA; the 5S rRNA and some of its associated proteins might help stabilize positioning of ribosome-bound tRNAs. This Enterobacter sp. (strain 638) protein is Large ribosomal subunit protein uL5.